A 156-amino-acid polypeptide reads, in one-letter code: Ribosomal RNA large subunit methyltransferase H (156 aa).

Residues L73, G104, and 123 to 128 (LSPLTM) each bind S-adenosyl-L-methionine.

This sequence belongs to the RNA methyltransferase RlmH family. Homodimer.

Its subcellular location is the cytoplasm. The catalysed reaction is pseudouridine(1915) in 23S rRNA + S-adenosyl-L-methionine = N(3)-methylpseudouridine(1915) in 23S rRNA + S-adenosyl-L-homocysteine + H(+). Functionally, specifically methylates the pseudouridine at position 1915 (m3Psi1915) in 23S rRNA. The protein is Ribosomal RNA large subunit methyltransferase H of Proteus mirabilis (strain HI4320).